A 432-amino-acid polypeptide reads, in one-letter code: Amino acid transporter ANT1 (432 aa).

Positions Met1 to Arg30 are disordered. Residues Met1 to Gln35 are Cytoplasmic-facing. The chain crosses the membrane as a helical span at residues Thr36 to Phe56. The Lumenal segment spans residues Arg57–Leu62. The chain crosses the membrane as a helical span at residues Ala63–Ile83. Residues Gln84–Tyr115 lie on the Cytoplasmic side of the membrane. Residues Leu116 to Ile136 traverse the membrane as a helical segment. At Gly137–Tyr147 the chain is on the lumenal side. The helical transmembrane segment at Gly148–Ile168 threads the bilayer. Residues Thr169–Ser172 lie on the Cytoplasmic side of the membrane. Residues Ala173 to Val193 traverse the membrane as a helical segment. The Lumenal portion of the chain corresponds to Lys194–Gly219. The helical transmembrane segment at Leu220 to Leu240 threads the bilayer. The Cytoplasmic portion of the chain corresponds to Glu241–Lys256. The chain crosses the membrane as a helical span at residues Val257–Gly277. Topologically, residues Asp278–Trp292 are lumenal. The helical transmembrane segment at Ser293–Val313 threads the bilayer. Over His314 to Arg353 the chain is Cytoplasmic. A helical transmembrane segment spans residues Thr354–Ala374. Residues Ser375–Ser379 are Lumenal-facing. Residues Thr380–Pro400 traverse the membrane as a helical segment. At Ser401–Asp410 the chain is on the cytoplasmic side. A helical transmembrane segment spans residues Val411–Gly431. A topological domain (lumenal) is located at residue Val432.

The protein belongs to the amino acid/polyamine transporter 2 family. Amino acid/auxin permease (AAAP) (TC 2.A.18.8) subfamily. Ubiquitous. Highly expressed in flowers and cauline leaves and at lower levels in stems, leaves and roots.

It localises to the endoplasmic reticulum membrane. Its function is as follows. Translocates aromatic and neutral amino acids such as tyrosine, tryptophan, phenylalanine, histidine, proline, leucine, valine, glutamine, as well as arginine. Transports the auxins indole-3-acetic acid (IAA) and 2,4-dichlorophenoxyacetic acid (2,4-D). This Arabidopsis thaliana (Mouse-ear cress) protein is Amino acid transporter ANT1.